The following is a 65-amino-acid chain: uncharacterized protein (65 aa).

Its subcellular location is the plastid. It localises to the chloroplast. This is an uncharacterized protein from Mesostigma viride (Green alga).